The chain runs to 861 residues: Probable beta-glucosidase A (861 aa).

The N-terminal stretch at 1–19 (MKLGWIEVAALAAASVVSA) is a signal peptide. Asparagine 62, asparagine 212, and asparagine 253 each carry an N-linked (GlcNAc...) asparagine glycan. Residue aspartate 281 is part of the active site. Residues asparagine 316, asparagine 323, asparagine 355, asparagine 443, asparagine 524, asparagine 543, asparagine 565, asparagine 669, asparagine 713, and asparagine 846 are each glycosylated (N-linked (GlcNAc...) asparagine).

It belongs to the glycosyl hydrolase 3 family.

It is found in the secreted. The enzyme catalyses Hydrolysis of terminal, non-reducing beta-D-glucosyl residues with release of beta-D-glucose.. It participates in glycan metabolism; cellulose degradation. Its function is as follows. Beta-glucosidases are one of a number of cellulolytic enzymes involved in the degradation of cellulosic biomass. Catalyzes the last step releasing glucose from the inhibitory cellobiose. The protein is Probable beta-glucosidase A (bglA) of Aspergillus flavus (strain ATCC 200026 / FGSC A1120 / IAM 13836 / NRRL 3357 / JCM 12722 / SRRC 167).